Here is a 1408-residue protein sequence, read N- to C-terminus: ARF guanine-nucleotide exchange factor 1 (1408 aa).

The residue at position 49 (S49) is a Phosphoserine. Residues T262–P287 form a disordered region. In terms of domain architecture, SEC7 spans F552–N706.

In terms of assembly, interacts (via N-terminal region) with SEC21 (via C-terminus). Interacts with GMH1. Interacts with DRS2.

It is found in the cytoplasm. Its subcellular location is the cytosol. It localises to the membrane. The protein localises to the endoplasmic reticulum. The protein resides in the mitochondrion. Its function is as follows. Activates the ARF proteins by exchanging bound GDP for free GTP. Plays a role in maintaining mitochondrial morphology, and in the turnover of mitochondria through mitophagy. The chain is ARF guanine-nucleotide exchange factor 1 (GEA1) from Saccharomyces cerevisiae (strain ATCC 204508 / S288c) (Baker's yeast).